Reading from the N-terminus, the 269-residue chain is MKTPVELAVSGMQTLGLQHRCRGGYRVKARTSYVDETLFGSPAGTRPTPPDFDPPWVEKANRTRGVGKEASKALGAKGSCETTPSRGSTPTLTPRKKNKYRPISHTPSYCDESLFGSRSEGASFGAPRMAKGDAAKLRALLWTPPPTPRGSHSPRPREAPLRAIHPAGPSKTEPGPAADSQKLSMGGLHSSRPLKRGLSHSLTHLNVPSTGHPATSAPHTNGPQDLRPSTSGVTFRSPLVTSRARSVSISVPSTPRRGGATQKPKPPWK.

The Nuclear export signal motif lies at 5–17; it reads VELAVSGMQTLGL. Disordered stretches follow at residues 66–105 and 141–269; these read VGKE…PISH and LWTP…PPWK. A compositionally biased stretch (polar residues) spans 80-92; sequence CETTPSRGSTPTL. The short motif at 92–108 is the Nuclear localization signal element; sequence LTPRKKNKYRPISHTPS. Residues 128 to 156 form an interaction with RBPJ/RBPSUH region; the sequence is RMAKGDAAKLRALLWTPPPTPRGSHSPRP. Residues 156–269 are interaction with tubulin; it reads PREAPLRAIH…ATQKPKPPWK (114 aa). A compositionally biased stretch (polar residues) spans 200 to 253; that stretch reads HSLTHLNVPSTGHPATSAPHTNGPQDLRPSTSGVTFRSPLVTSRARSVSISVPS.

The protein belongs to the RITA family. In terms of assembly, interacts with RBPJ/RBPSUH.

The protein localises to the cytoplasm. It is found in the nucleus. Its subcellular location is the cytoskeleton. It localises to the microtubule organizing center. The protein resides in the centrosome. Functionally, tubulin-binding protein that acts as a negative regulator of Notch signaling pathway. Shuttles between the cytoplasm and the nucleus and mediates the nuclear export of RBPJ/RBPSUH, thereby preventing the interaction between RBPJ/RBPSUH and NICD product of Notch proteins (Notch intracellular domain), leading to down-regulate Notch-mediated transcription. May play a role in neurogenesis. The polypeptide is RBPJ-interacting and tubulin-associated protein 1 (RITA1) (Homo sapiens (Human)).